The sequence spans 206 residues: Ribosomal RNA large subunit methyltransferase E (206 aa).

Residues Gly60, Trp62, Asp80, Asp96, and Asp121 each contribute to the S-adenosyl-L-methionine site. Residue Lys161 is the Proton acceptor of the active site.

This sequence belongs to the class I-like SAM-binding methyltransferase superfamily. RNA methyltransferase RlmE family.

It localises to the cytoplasm. It catalyses the reaction uridine(2552) in 23S rRNA + S-adenosyl-L-methionine = 2'-O-methyluridine(2552) in 23S rRNA + S-adenosyl-L-homocysteine + H(+). Specifically methylates the uridine in position 2552 of 23S rRNA at the 2'-O position of the ribose in the fully assembled 50S ribosomal subunit. In Nitrosomonas europaea (strain ATCC 19718 / CIP 103999 / KCTC 2705 / NBRC 14298), this protein is Ribosomal RNA large subunit methyltransferase E.